The chain runs to 155 residues: MKTYSAKPSEIEKKWWVIDAKNIVLGRLASRVAIMLRGKHKPSFTPHLDCGDNIIIINAEHIKLTGKKLNHKDGKVYYRHTGFPGGIKDTTAGKILSGKYPERVIKMAVKRMITRNVLGAKQMSNLYVYANCEHPHMAQQPTVYDFASKNPKNKK.

This sequence belongs to the universal ribosomal protein uL13 family. In terms of assembly, part of the 50S ribosomal subunit.

Functionally, this protein is one of the early assembly proteins of the 50S ribosomal subunit, although it is not seen to bind rRNA by itself. It is important during the early stages of 50S assembly. The sequence is that of Large ribosomal subunit protein uL13 from Rickettsia typhi (strain ATCC VR-144 / Wilmington).